Consider the following 464-residue polypeptide: MLATDSDPIVAIATAAGRGGIGVVRVSFGRGGEAAALPLIDALCGQKLAPRHASYVPFLDEHGAPLDRGIALYFPAPHSYTGEHVLELQGHGGPIVMQLLLQRCLDAGRGFGLRLAEPGEFTRRAFLNDKLDLAQAEAVADLIEASTEAAARSAGRSLDGAFSRQIHALVDDVITLRMLVEATLDFPEEEIDFLEAADARGKLAKIRAQLAHVLGDARQGALLREGLSVVLAGQPNVGKSSLLNALAGAELAIVTPIAGTTRDKVAQTIQVEGIPLHIIDTAGLRETEDEVERIGIARTWSEIERADVVLHLLDSRNGMTADDETIAARFPGGVPVVRVLNKTDLTGVAACVEHPAAEGDLTEVHLSAKRGDGIDMLRAELLRIAGWQAGAEGVYLARERHLIALRAAQEHLAQAADHAEQRAQSLDLFAEELRLAQEQLNAITGEFTSDDLLGVIFSRFCIGK.

(6S)-5-formyl-5,6,7,8-tetrahydrofolate contacts are provided by Arg-25, Glu-87, and Lys-130. The region spanning 226–386 (GLSVVLAGQP…LRAELLRIAG (161 aa)) is the TrmE-type G domain. A K(+)-binding site is contributed by Asn-236. GTP-binding positions include 236 to 241 (NVGKSS), 255 to 261 (TPIAGTT), and 280 to 283 (DTAG). Ser-240 is a binding site for Mg(2+). 3 residues coordinate K(+): Thr-255, Ile-257, and Thr-260. Residue Thr-261 coordinates Mg(2+). Lys-464 lines the (6S)-5-formyl-5,6,7,8-tetrahydrofolate pocket.

This sequence belongs to the TRAFAC class TrmE-Era-EngA-EngB-Septin-like GTPase superfamily. TrmE GTPase family. In terms of assembly, homodimer. Heterotetramer of two MnmE and two MnmG subunits. Requires K(+) as cofactor.

It localises to the cytoplasm. Its function is as follows. Exhibits a very high intrinsic GTPase hydrolysis rate. Involved in the addition of a carboxymethylaminomethyl (cmnm) group at the wobble position (U34) of certain tRNAs, forming tRNA-cmnm(5)s(2)U34. This Burkholderia lata (strain ATCC 17760 / DSM 23089 / LMG 22485 / NCIMB 9086 / R18194 / 383) protein is tRNA modification GTPase MnmE.